We begin with the raw amino-acid sequence, 467 residues long: ATP-dependent protease ATPase subunit HslU (467 aa).

Residues Val-22 and 64–69 (GVGKTE) contribute to the ATP site. Positions 149–192 (QTNNPLESLFGGAIPNFGQNNEDEEEPPTEEIKTKRSEIKRQLE) are disordered. The segment covering 178-192 (EEIKTKRSEIKRQLE) has biased composition (basic and acidic residues). Residues Asp-280, Glu-345, and Arg-417 each coordinate ATP.

This sequence belongs to the ClpX chaperone family. HslU subfamily. In terms of assembly, a double ring-shaped homohexamer of HslV is capped on each side by a ring-shaped HslU homohexamer. The assembly of the HslU/HslV complex is dependent on binding of ATP.

The protein resides in the cytoplasm. ATPase subunit of a proteasome-like degradation complex; this subunit has chaperone activity. The binding of ATP and its subsequent hydrolysis by HslU are essential for unfolding of protein substrates subsequently hydrolyzed by HslV. HslU recognizes the N-terminal part of its protein substrates and unfolds these before they are guided to HslV for hydrolysis. This Staphylococcus aureus (strain MRSA252) protein is ATP-dependent protease ATPase subunit HslU.